Here is a 180-residue protein sequence, read N- to C-terminus: CASP-like protein 5A1 (180 aa).

Topologically, residues 1 to 36 (MEVSHPAVHPVAVPPVLTEPPARVRMKDYQGMPGTL) are cytoplasmic. A helical membrane pass occupies residues 37 to 57 (GGLALRLGQLGFAVLSFSIMV). At 58-67 (STPDFSQVTA) the chain is on the extracellular side. A helical membrane pass occupies residues 68–88 (FCYLVAATVLQTLWSSITAVV). Residues 89–102 (DIYALSVRRSLHHS) lie on the Cytoplasmic side of the membrane. Residues 103 to 123 (LLVGLFAVGDGVTSTLTFAAA) traverse the membrane as a helical segment. Over 124 to 150 (CATAGITVLIDNDLDECGQNHCGRFEA) the chain is Extracellular. Residues 151-171 (AAAMAFLSWIMAAPSFLLAFW) form a helical membrane-spanning segment. Residues 172 to 180 (SFGNKIVCF) are Cytoplasmic-facing.

This sequence belongs to the Casparian strip membrane proteins (CASP) family. In terms of assembly, homodimer and heterodimers.

Its subcellular location is the cell membrane. In Pteridium aquilinum subsp. aquilinum (Bracken fern), this protein is CASP-like protein 5A1.